The sequence spans 88 residues: UPF0335 protein WD_0557 (88 aa).

It belongs to the UPF0335 family.

This chain is UPF0335 protein WD_0557, found in Wolbachia pipientis wMel.